Consider the following 200-residue polypeptide: 3-isopropylmalate dehydratase small subunit (200 aa).

This sequence belongs to the LeuD family. LeuD type 1 subfamily. In terms of assembly, heterodimer of LeuC and LeuD.

The catalysed reaction is (2R,3S)-3-isopropylmalate = (2S)-2-isopropylmalate. It functions in the pathway amino-acid biosynthesis; L-leucine biosynthesis; L-leucine from 3-methyl-2-oxobutanoate: step 2/4. Catalyzes the isomerization between 2-isopropylmalate and 3-isopropylmalate, via the formation of 2-isopropylmaleate. In Aliivibrio salmonicida (strain LFI1238) (Vibrio salmonicida (strain LFI1238)), this protein is 3-isopropylmalate dehydratase small subunit.